A 429-amino-acid chain; its full sequence is Adenylosuccinate synthetase (429 aa).

GTP contacts are provided by residues glycine 12–lysine 18 and glycine 40–threonine 42. The active-site Proton acceptor is aspartate 13. Positions 13 and 40 each coordinate Mg(2+). Residues aspartate 13–lysine 16, asparagine 38–histidine 41, threonine 128, arginine 142, glutamine 224, threonine 239, and arginine 303 each bind IMP. The active-site Proton donor is the histidine 41. Substrate is bound at residue valine 299–arginine 305. Residues arginine 305, leucine 331–aspartate 333, and serine 413–glycine 415 each bind GTP.

This sequence belongs to the adenylosuccinate synthetase family. As to quaternary structure, homodimer. Requires Mg(2+) as cofactor.

The protein localises to the cytoplasm. The catalysed reaction is IMP + L-aspartate + GTP = N(6)-(1,2-dicarboxyethyl)-AMP + GDP + phosphate + 2 H(+). Its pathway is purine metabolism; AMP biosynthesis via de novo pathway; AMP from IMP: step 1/2. Its function is as follows. Plays an important role in the de novo pathway of purine nucleotide biosynthesis. Catalyzes the first committed step in the biosynthesis of AMP from IMP. The polypeptide is Adenylosuccinate synthetase (Clostridioides difficile (strain 630) (Peptoclostridium difficile)).